A 734-amino-acid chain; its full sequence is MALRFPRFSQGLAQDPTTRRIWFGIATAHDFESHDDITEERLYQNIFASHFGQLAIIFLWTSGNLFHVAWQGNFESWVRDPLHVRPIAHAIWDPHFGQPAVEAFTRGGALGPVNIAYSGVYQWWYTIGLRTNEDLYTGALFLLFLSAVSLIAGWLHLQPKWKPSVSWFKNAESRLNHHLSGLFGVSSLAWTGHLVHVAIPGSRGEYVRWNNFLDVLPHPQGLGPLFTGQWNLYAQNPDSSSHLFGTAQGAGTAILTLLGGFHPQTQSLWLTDIAHHHLAIALIFLVAGHMYRTNFGIGHSMKDLLEAHTPPGGRLGRGHKGLYDTINNSVHFQLGLALASLGVITSLVAQHMYSLPAYAFIAQDFTTQAALYTHHQYIAGFIMTGAFAHGAIFFIRDYNPEQNKDNVLARMLDHKEAIISHLSWASLFLGFHTLGLYVHNDVMLAFGTPEKQILIEPIFAQWIQSAHGKTSYGFDVLLSSTNSPAFNAGRSIWLPGWLNAVNENSNSLFLTIGPGDFLVHHAIALGLHTTTLILVKGALDARGSKLMPDKKDFGYSFPCDGPGRGGTCDISAWDAFYLAVFWMLNTIGWVTFYWHWKHITLWQGNVSQFNESSTYLMGWLRDYLWLNSSQLINGYNPFGMNSLSVWAWMFLFGHLVWATGFMFLISWRGYWQELIETLAWAHERTPLANLIRWRDKPVALSIVQARLVGLAHFSVGYIFTYAAFLIASTSGKFG.

Helical transmembrane passes span 46-69, 135-158, 175-199, 273-291, 330-353, 369-395, 417-439, and 517-535; these read IFAS…FHVA, LYTG…LHLQ, LNHH…HVAI, IAHH…GHMY, VHFQ…QHMY, AALY…IFFI, AIIS…LYVH, and FLVH…LILV. 2 residues coordinate [4Fe-4S] cluster: Cys559 and Cys568. A run of 2 helical transmembrane segments spans residues 575-596 and 643-665; these read AFYL…YWHW and LSVW…MFLI. Chlorophyll a is bound by residues His654, Met662, and Tyr670. A phylloquinone-binding site is contributed by Trp671. The chain crosses the membrane as a helical span at residues 707 to 727; it reads LVGLAHFSVGYIFTYAAFLIA.

The protein belongs to the PsaA/PsaB family. As to quaternary structure, the PsaA/B heterodimer binds the P700 chlorophyll special pair and subsequent electron acceptors. PSI consists of a core antenna complex that captures photons, and an electron transfer chain that converts photonic excitation into a charge separation. The eukaryotic PSI reaction center is composed of at least 11 subunits. P700 is a chlorophyll a/chlorophyll a' dimer, A0 is one or more chlorophyll a, A1 is one or both phylloquinones and FX is a shared 4Fe-4S iron-sulfur center. is required as a cofactor.

It localises to the plastid. Its subcellular location is the chloroplast thylakoid membrane. The enzyme catalyses reduced [plastocyanin] + hnu + oxidized [2Fe-2S]-[ferredoxin] = oxidized [plastocyanin] + reduced [2Fe-2S]-[ferredoxin]. Functionally, psaA and PsaB bind P700, the primary electron donor of photosystem I (PSI), as well as the electron acceptors A0, A1 and FX. PSI is a plastocyanin-ferredoxin oxidoreductase, converting photonic excitation into a charge separation, which transfers an electron from the donor P700 chlorophyll pair to the spectroscopically characterized acceptors A0, A1, FX, FA and FB in turn. Oxidized P700 is reduced on the lumenal side of the thylakoid membrane by plastocyanin. The chain is Photosystem I P700 chlorophyll a apoprotein A2 from Platanus occidentalis (Sycamore).